A 279-amino-acid polypeptide reads, in one-letter code: Acetyl-coenzyme A carboxylase carboxyl transferase subunit beta (279 aa).

A CoA carboxyltransferase N-terminal domain is found at 23-279; the sequence is LWWKCESCGA…LSQILGHLSS (257 aa). Positions 27, 30, 46, and 49 each coordinate Zn(2+). The C4-type zinc-finger motif lies at 27–49; that stretch reads CESCGAMLHKKQVEDHFYTCCEC.

This sequence belongs to the AccD/PCCB family. As to quaternary structure, acetyl-CoA carboxylase is a heterohexamer composed of biotin carboxyl carrier protein (AccB), biotin carboxylase (AccC) and two subunits each of ACCase subunit alpha (AccA) and ACCase subunit beta (AccD). It depends on Zn(2+) as a cofactor.

It is found in the cytoplasm. It carries out the reaction N(6)-carboxybiotinyl-L-lysyl-[protein] + acetyl-CoA = N(6)-biotinyl-L-lysyl-[protein] + malonyl-CoA. It functions in the pathway lipid metabolism; malonyl-CoA biosynthesis; malonyl-CoA from acetyl-CoA: step 1/1. In terms of biological role, component of the acetyl coenzyme A carboxylase (ACC) complex. Biotin carboxylase (BC) catalyzes the carboxylation of biotin on its carrier protein (BCCP) and then the CO(2) group is transferred by the transcarboxylase to acetyl-CoA to form malonyl-CoA. The chain is Acetyl-coenzyme A carboxylase carboxyl transferase subunit beta from Prosthecochloris aestuarii (strain DSM 271 / SK 413).